Reading from the N-terminus, the 1378-residue chain is DNA-directed RNA polymerase subunit beta' (1378 aa).

Zn(2+) is bound by residues Cys-69, Cys-71, Cys-84, and Cys-87. Mg(2+) contacts are provided by Asp-460, Asp-462, and Asp-464. Residues Cys-808, Cys-882, Cys-889, and Cys-892 each coordinate Zn(2+).

Belongs to the RNA polymerase beta' chain family. As to quaternary structure, the RNAP catalytic core consists of 2 alpha, 1 beta, 1 beta' and 1 omega subunit. When a sigma factor is associated with the core the holoenzyme is formed, which can initiate transcription. Requires Mg(2+) as cofactor. Zn(2+) serves as cofactor.

The enzyme catalyses RNA(n) + a ribonucleoside 5'-triphosphate = RNA(n+1) + diphosphate. Its function is as follows. DNA-dependent RNA polymerase catalyzes the transcription of DNA into RNA using the four ribonucleoside triphosphates as substrates. The protein is DNA-directed RNA polymerase subunit beta' of Rickettsia canadensis (strain McKiel).